The primary structure comprises 642 residues: Glutamyl-tRNA(Gln) amidotransferase subunit E (642 aa).

The protein belongs to the GatB/GatE family. GatE subfamily. Heterodimer of GatD and GatE.

The enzyme catalyses L-glutamyl-tRNA(Gln) + L-glutamine + ATP + H2O = L-glutaminyl-tRNA(Gln) + L-glutamate + ADP + phosphate + H(+). Allows the formation of correctly charged Gln-tRNA(Gln) through the transamidation of misacylated Glu-tRNA(Gln) in organisms which lack glutaminyl-tRNA synthetase. The reaction takes place in the presence of glutamine and ATP through an activated gamma-phospho-Glu-tRNA(Gln). The GatDE system is specific for glutamate and does not act on aspartate. This Aeropyrum pernix (strain ATCC 700893 / DSM 11879 / JCM 9820 / NBRC 100138 / K1) protein is Glutamyl-tRNA(Gln) amidotransferase subunit E.